Reading from the N-terminus, the 947-residue chain is Pyruvate, phosphate dikinase 1, chloroplastic (947 aa).

Residues 1 to 62 (MAASVSRAIC…GRGQHCSPLR (62 aa)) constitute a chloroplast transit peptide. The disordered stretch occupies residues 21 to 54 (DREATSFARRSVAAPRPPHAKAAGVIRSDSGAGR). Ala63 bears the N-acetylalanine; partial mark. Thr309 carries the phosphothreonine modification. Ser506 carries the post-translational modification Phosphoserine. Residue Thr527 is modified to Phosphothreonine; by PDRP1. The residue at position 528 (Ser528) is a Phosphoserine; by PDRP1. The active-site Tele-phosphohistidine intermediate is His529. Arg635, Arg692, Glu821, Gly842, Thr843, Asn844, and Asp845 together coordinate substrate. Glu821 is a Mg(2+) binding site. Mg(2+) is bound at residue Asp845. Catalysis depends on Cys907, which acts as the Proton donor.

It belongs to the PEP-utilizing enzyme family. Homotetramer. The cofactor is Mg(2+). Post-translationally, phosphorylation of Thr-527 in the dark inactivates the enzyme, dephosphorylation upon light stimulation reactivates the enzyme. More highly phosphorylated when grown under high rather than low light regimes (70 vs 900 umol photons/m-2/s). the degree of phosphorylation is strictly regulated by light intensity and the light/dark transition has no influence. Phosphorylated in both mesophyll and bundle sheath cells. The phosphorylation at Ser-528 may be important for the phosphorylation at Thr-527 and may also be regulated by light intensity. In terms of tissue distribution, isoform C4PPDKZM1 mainly localized in mesophyll cells and only a low level is found in bundle sheath cells. Isoform CYPPDKZM1 expressed in roots, stems and etiolated leaves.

Its subcellular location is the plastid. The protein localises to the chloroplast. The protein resides in the cytoplasm. The enzyme catalyses pyruvate + phosphate + ATP = phosphoenolpyruvate + AMP + diphosphate + H(+). It functions in the pathway photosynthesis; C4 acid pathway. Activated by light-induced dephosphorylation. Inhibited by dark-induced phosphorylation. Both reactions are catalyzed by PDRP1. Inactivated by cold due to the dissociation of the homotetramer. Independent of circadian regulation. Its function is as follows. Formation of phosphoenolpyruvate, which is the primary acceptor of CO(2) in C4 and some Crassulacean acid metabolism plants. This Zea mays (Maize) protein is Pyruvate, phosphate dikinase 1, chloroplastic.